We begin with the raw amino-acid sequence, 822 residues long: MTVNLTLQHASEIIGQDNVDLTLAAGASAKVSNLTVASEWLTNNTGYLVTISVNDKSGNVLSSKRAGLSVEDDWTVFPRYGIVAGSPTDQNSILVKNLEAYRKELELMKSMNINSYFFYDAYNEATDPFPEGVDSFVQKWNTWSHTQVDTKAVKELVDQVHKSGAVAMLYNMISADSNPKNPALPLAALAYNFYDSFGKKGEPMTYTIGDNPTQVYYDPANPDWQKYIAGVMKSAMDRMGFDGWQGDTIGDNRVTDYEHRNSTDEADSHMMSDSYASFINAMKDLIGEKYYITINDVNGGNDDKLAKARQDVVYNELWTNGGSVIPGRMQVAYGDLKARIDMVRNKTGKSLIVGAYMEEPGIDYTVPGGKATNGAGKDALAGKPLQADATLLVDATVAAAGGYHMSIAALANANAALNVLQSAYYPTQYLSVAKDTIRKLYNYQQFITAYENLLRGEGVTNSTQAVSTKNASGEILSKDALGVTGDQVWTFAKSGKGFSTVQMINMMGINAGWHNEEGYADNKTPDAQENLTVRLSLAGKTAQEAAKIADQVYVTSPDDWATSSMKKAQASLETDENGQPVLVISVPKLTLWNMLYIKEDTTATPVEPVTNQAGKKVDNTVTSEASSETAKSENTTVNKGSEAPTDTKPSVEAPKLDETTKPAPSVDELVNSAAVPVAIAVSETAHDKKDDNSVSNTDQGTVASDSITTPASEAASTAASTVSSEVSESVTVSSEPSETENSSEASTSESATPTTTAISESHAVVEPVASLTESESQASTSLVSETTSTIVSVAPSEVSESTSEEVILMDYQKTSIVGIDSL.

The first 38 residues, 1-38 (MTVNLTLQHASEIIGQDNVDLTLAAGASAKVSNLTVAS), serve as a signal peptide directing secretion. 2 disordered regions span residues 607–669 (EPVT…VDEL) and 683–788 (ETAH…ETTS). Low complexity predominate over residues 619–636 (NTVTSEASSETAKSENTT). Polar residues predominate over residues 693-705 (SVSNTDQGTVASD). Residues 706–761 (SITTPASEAASTAASTVSSEVSESVTVSSEPSETENSSEASTSESATPTTTAISES) show a composition bias toward low complexity. Over residues 771–788 (LTESESQASTSLVSETTS) the composition is skewed to polar residues.

The protein belongs to the glycosyl hydrolase 66 family.

It carries out the reaction Endohydrolysis of (1-&gt;6)-alpha-D-glucosidic linkages in dextran.. In Streptococcus salivarius, this protein is Dextranase (dex).